The primary structure comprises 599 residues: MTTQVPPSALLPLNPEQLARLQAATTDLTPTQLAWVSGYFWGVLNQQPAALAATPAPAAEMPGITIISASQTGNARRVAEALRDDLLAAKLNVKLVNAGDYKFKQIASEKLLIVVTSTQGEGEPPEEAVALHKFLFSKKAPKLENTAFAVFSLGDSSYEFFCQSGKDFDSKLAELGGERLLDRVDADVEYQAAASEWRARVVDALKSRAPVAAPSQSVATGAVNEIHTSPYSKDAPLVASLSVNQKITGRNSEKDVRHIEIDLGDSGLRYQPGDALGVWYQNDPALVKELVELLWLKGDEPVTVEGKTLPLNEALQWHFELTVNTANIVENYATLTRSETLLPLVGDKAKLQHYAATTPIVDMVRFSPAQLDAEALINLLRPLTPRLYSIASSQAEVENEVHVTVGVVRYDVEGRARAGGASSFLADRVEEEGEVRVFIEHNDNFRLPANPETPVIMIGPGTGIAPFRAFMQQRAADEAPGKNWLFFGNPHFTEDFLYQVEWQRYVKDGVLTRIDLAWSRDQKEKVYVQDKLREQGAELWRWINDGAHIYVCGDANRMAKDVEQALLEVIAEFGGMDTEAADEFLSELRVERRYQRDVY.

Residues 64–202 (ITIISASQTG…AASEWRARVV (139 aa)) form the Flavodoxin-like domain. FMN contacts are provided by residues 70-75 (SQTGNA), 117-120 (STQG), and 153-162 (LGDSSYEFFC). The FAD-binding FR-type domain occupies 234-448 (DAPLVASLSV…IEHNDNFRLP (215 aa)). FAD is bound by residues threonine 322, alanine 356, 386 to 389 (RLYS), 404 to 406 (TVG), tyrosine 410, and 419 to 422 (GGAS). Residues 519–520 (SR), 525–529 (KVYVQ), and aspartate 561 each bind NADP(+). Residue tyrosine 599 participates in FAD binding.

The protein belongs to the NADPH-dependent sulphite reductase flavoprotein subunit CysJ family. This sequence in the N-terminal section; belongs to the flavodoxin family. It in the C-terminal section; belongs to the flavoprotein pyridine nucleotide cytochrome reductase family. As to quaternary structure, alpha(8)-beta(8). The alpha component is a flavoprotein, the beta component is a hemoprotein. FAD serves as cofactor. Requires FMN as cofactor.

The catalysed reaction is hydrogen sulfide + 3 NADP(+) + 3 H2O = sulfite + 3 NADPH + 4 H(+). It participates in sulfur metabolism; hydrogen sulfide biosynthesis; hydrogen sulfide from sulfite (NADPH route): step 1/1. Component of the sulfite reductase complex that catalyzes the 6-electron reduction of sulfite to sulfide. This is one of several activities required for the biosynthesis of L-cysteine from sulfate. The flavoprotein component catalyzes the electron flow from NADPH -&gt; FAD -&gt; FMN to the hemoprotein component. This is Sulfite reductase [NADPH] flavoprotein alpha-component from Escherichia coli (strain ATCC 8739 / DSM 1576 / NBRC 3972 / NCIMB 8545 / WDCM 00012 / Crooks).